The following is a 360-amino-acid chain: UDP-N-acetylglucosamine--N-acetylmuramyl-(pentapeptide) pyrophosphoryl-undecaprenol N-acetylglucosamine transferase (360 aa).

UDP-N-acetyl-alpha-D-glucosamine is bound by residues Ser-198 and Gln-289.

It belongs to the glycosyltransferase 28 family. MurG subfamily.

It localises to the cell membrane. It catalyses the reaction Mur2Ac(oyl-L-Ala-gamma-D-Glu-L-Lys-D-Ala-D-Ala)-di-trans,octa-cis-undecaprenyl diphosphate + UDP-N-acetyl-alpha-D-glucosamine = beta-D-GlcNAc-(1-&gt;4)-Mur2Ac(oyl-L-Ala-gamma-D-Glu-L-Lys-D-Ala-D-Ala)-di-trans,octa-cis-undecaprenyl diphosphate + UDP + H(+). It participates in cell wall biogenesis; peptidoglycan biosynthesis. Cell wall formation. Catalyzes the transfer of a GlcNAc subunit on undecaprenyl-pyrophosphoryl-MurNAc-pentapeptide (lipid intermediate I) to form undecaprenyl-pyrophosphoryl-MurNAc-(pentapeptide)GlcNAc (lipid intermediate II). The protein is UDP-N-acetylglucosamine--N-acetylmuramyl-(pentapeptide) pyrophosphoryl-undecaprenol N-acetylglucosamine transferase of Streptococcus pyogenes serotype M3 (strain SSI-1).